A 648-amino-acid polypeptide reads, in one-letter code: Golgin subfamily A member 8G (648 aa).

A compositionally biased stretch (pro residues) spans 1–11; the sequence is MWPQARLPPHP. Disordered regions lie at residues 1–84 and 119–139; these read MWPQ…SATL and NKQV…KQKA. A compositionally biased stretch (polar residues) spans 50–62; the sequence is TNGSIHETATSGG. Coiled-coil stretches lie at residues 105 to 160, 223 to 275, and 318 to 424; these read VSQL…LNTD, LEQS…MSQE, and EVEL…QQKQ. Over residues 121-139 the composition is skewed to basic and acidic residues; the sequence is QVEHQLEEEKKANNEKQKA. Disordered regions lie at residues 356 to 376, 434 to 461, 508 to 549, and 600 to 624; these read LREQ…QEER, ALPG…SIPQ, PITK…GVAA, and PVQG…QDHQ. Residues 441 to 453 are compositionally biased toward basic and acidic residues; it reads GGGHLDSEGEEAP. Residues 521–534 are compositionally biased toward gly residues; the sequence is PGGGHHQAGPGQGG.

The protein belongs to the GOLGA8 family.

The protein is Golgin subfamily A member 8G of Homo sapiens (Human).